Consider the following 269-residue polypeptide: 3-methyl-2-oxobutanoate hydroxymethyltransferase (269 aa).

Mg(2+) is bound by residues Asp42 and Asp81. 3-methyl-2-oxobutanoate contacts are provided by residues 42–43 (DS), Asp81, and Lys111. Glu113 contacts Mg(2+). Residue Glu179 is the Proton acceptor of the active site. Positions 250–269 (SGEFPRESHSHTEDELDDLY) are disordered. Residues 252-262 (EFPRESHSHTE) are compositionally biased toward basic and acidic residues.

This sequence belongs to the PanB family. Homodecamer; pentamer of dimers. Mg(2+) is required as a cofactor.

The protein localises to the cytoplasm. The catalysed reaction is 3-methyl-2-oxobutanoate + (6R)-5,10-methylene-5,6,7,8-tetrahydrofolate + H2O = 2-dehydropantoate + (6S)-5,6,7,8-tetrahydrofolate. It functions in the pathway cofactor biosynthesis; coenzyme A biosynthesis. Its function is as follows. Catalyzes the reversible reaction in which hydroxymethyl group from 5,10-methylenetetrahydrofolate is transferred onto alpha-ketoisovalerate to form ketopantoate. This is 3-methyl-2-oxobutanoate hydroxymethyltransferase from Haloarcula marismortui (strain ATCC 43049 / DSM 3752 / JCM 8966 / VKM B-1809) (Halobacterium marismortui).